A 1792-amino-acid chain; its full sequence is Eukaryotic translation initiation factor 4G (1792 aa).

Residues 1–12 are compositionally biased toward basic and acidic residues; that stretch reads MSQRGDRGEGHA. Disordered regions lie at residues 1–285, 424–446, 491–590, 612–659, 678–761, 874–912, 960–993, 999–1018, 1275–1299, 1407–1503, and 1537–1600; these read MSQR…PRPP, DSSG…TYGS, SPSM…PTPV, NSVP…EDLK, GVNK…NESH, VASE…EITR, SSSI…LDDW, MSTP…EANG, GERE…EERE, WQQR…HRTT, and ELSS…KLYS. A compositionally biased stretch (gly residues) spans 21 to 42; it reads FGGGHRGGGGVGGAGKGGGGSS. Positions 88–107 are enriched in pro residues; sequence PLRPPAPQNAPAHVPVPAPR. Composition is skewed to polar residues over residues 147–156 and 179–191; these read RISSTSTSQG and STMQ…SSAP. Composition is skewed to low complexity over residues 216–243, 263–278, and 432–442; these read PQAP…PLQQ, PSQV…SVPN, and PSVQQQSQPVS. Residues 491–517 show a composition bias toward polar residues; it reads SPSMNTGPGSNKDNLAGSTTSGHSQVT. 3 stretches are compositionally biased toward basic and acidic residues: residues 545 to 564, 571 to 587, and 633 to 643; these read DVNK…KDNE, KSGE…EKHP, and DSNKNATKDTR. Over residues 644–654 the composition is skewed to polar residues; that stretch reads NLSQEPQSASS. A compositionally biased stretch (low complexity) spans 699-718; the sequence is AADASSIDRSSARSTSESTE. A compositionally biased stretch (basic and acidic residues) spans 964–990; it reads ADHELPDESSEKEVNMGEDEGKKKVEL. Positions 1018–1030 are EIF4E-binding; the sequence is GRKRYSRDFLLTL. An MIF4G domain is found at 1183 to 1406; that stretch reads QRQLKAILNK…RDSIDLRKNK (224 aa). Over residues 1278–1289 the composition is skewed to acidic residues; it reads EEAEADKTEEEG. Composition is skewed to basic and acidic residues over residues 1290–1299 and 1411–1432; these read EIKQTKEERE and RKVE…ERHA. 2 stretches are compositionally biased toward low complexity: residues 1439-1450 and 1461-1470; these read RGSVVGSGPRRG and SAAALASPSS. Basic and acidic residues-rich tracts occupy residues 1490–1503 and 1559–1572; these read IRFE…HRTT and AREE…DRSG. Polar residues predominate over residues 1576–1593; it reads PNTQFAGPSNRPASQEGR. Residues 1603–1727 form the MI domain; it reads DLREKSISAI…SLQEVGTLIE (125 aa).

The protein belongs to the eukaryotic initiation factor 4G family. EIF4F is a multi-subunit complex, the composition of which varies with external and internal environmental conditions. It is composed of at least EIF4A, EIF4E and EIF4G. In higher plants two isoforms of EIF4F have been identified, named isoform EIF4F and isoform EIF(iso)4F. Isoform EIF4F has subunits p220 and p26, whereas isoform EIF(iso)4F has subunits p82 and p28.

Component of the protein complex eIF4F, which is involved in the recognition of the mRNA cap, ATP-dependent unwinding of 5'-terminal secondary structure and recruitment of mRNA to the ribosome. The polypeptide is Eukaryotic translation initiation factor 4G (Oryza sativa subsp. japonica (Rice)).